Here is a 519-residue protein sequence, read N- to C-terminus: Lysine 5,6-aminomutase alpha subunit (519 aa).

57 to 59 (DEV) lines the adenosylcob(III)alamin pocket. Residues 187-192 (RTTGQS), serine 241, tyrosine 266, arginine 271, and asparagine 302 contribute to the pyridoxal 5'-phosphate site.

The protein belongs to the KamD family. Heterotetramer of 2 alpha and 2 beta subunits. Adenosylcob(III)alamin is required as a cofactor. Pyridoxal 5'-phosphate serves as cofactor.

It catalyses the reaction (3S)-3,6-diaminohexanoate = (3S,5S)-3,5-diaminohexanoate. The catalysed reaction is D-lysine = (2R,5S)-2,5-diaminohexanoate. Its pathway is amino-acid metabolism; lysine degradation. Rapidly inactivated in the presence of D-lysine and to a lesser extent in the absence of adenosylcobalamin (Adocbl). Activity is stable in the presence of Adocbl when D-lysine is absent. Adocbl imparts thermal stability at 37 degrees Celsius. Functionally, catalyzes the migration of the L-beta-lysine and D-lysine epsilon amino group to the delta carbon to produce 3,5-diaminohexanoate and 2,5-diaminohexanoate, respectively. The protein is Lysine 5,6-aminomutase alpha subunit (kamD) of Acetoanaerobium sticklandii (strain ATCC 12662 / DSM 519 / JCM 1433 / CCUG 9281 / NCIMB 10654 / HF) (Clostridium sticklandii).